The chain runs to 497 residues: Inactive metallocarboxypeptidase ecm14 (497 aa).

The N-terminal stretch at 1-28 (MAYNKSLKSLVFILLASQIVFVLFLCYG) is a signal peptide. Positions 29-148 (KSSRELGVKW…TLFESIVPDT (120 aa)) are excised as a propeptide. The Peptidase M14 domain occupies 182–492 (SYQNLESINS…AMILYYGEFI (311 aa)). Zn(2+)-binding residues include histidine 248 and glutamate 251. Substrate contacts are provided by residues 248-251 (HARE) and 323-324 (DA). The cysteines at positions 317 and 337 are disulfide-linked. Histidine 377 is a Zn(2+) binding site. 378 to 379 (SY) is a binding site for substrate.

This sequence belongs to the peptidase M14 family. It depends on Zn(2+) as a cofactor.

Its subcellular location is the endoplasmic reticulum. It localises to the secreted. Functionally, inactive carboxypeptidase that may play a role in cell wall organization and biogenesis. This is Inactive metallocarboxypeptidase ecm14 from Schizosaccharomyces pombe (strain 972 / ATCC 24843) (Fission yeast).